A 711-amino-acid chain; its full sequence is DNA topoisomerase 3 (711 aa).

The 134-residue stretch at 2–135 folds into the Toprim domain; the sequence is KSLILAEKPS…IKRLWISSVT (134 aa). E8 and D104 together coordinate Mg(2+). One can recognise a Topo IA-type catalytic domain in the interval 152-580; that stretch reads YQNLYEAALA…EMKNFTFKVV (429 aa). The tract at residues 186–191 is interaction with DNA; that stretch reads SLGRVQ. Y305 functions as the O-(5'-phospho-DNA)-tyrosine intermediate in the catalytic mechanism.

This sequence belongs to the type IA topoisomerase family. Requires Mg(2+) as cofactor.

The catalysed reaction is ATP-independent breakage of single-stranded DNA, followed by passage and rejoining.. Functionally, releases the supercoiling and torsional tension of DNA, which is introduced during the DNA replication and transcription, by transiently cleaving and rejoining one strand of the DNA duplex. Introduces a single-strand break via transesterification at a target site in duplex DNA. The scissile phosphodiester is attacked by the catalytic tyrosine of the enzyme, resulting in the formation of a DNA-(5'-phosphotyrosyl)-enzyme intermediate and the expulsion of a 3'-OH DNA strand. The free DNA strand then undergoes passage around the unbroken strand, thus removing DNA supercoils. Finally, in the religation step, the DNA 3'-OH attacks the covalent intermediate to expel the active-site tyrosine and restore the DNA phosphodiester backbone. This chain is DNA topoisomerase 3, found in Staphylococcus epidermidis (strain ATCC 12228 / FDA PCI 1200).